A 208-amino-acid chain; its full sequence is Anthranilate synthase component 2 (208 aa).

Residues 3 to 208 (HVVLIDNHDS…SRCVEQLLAN (206 aa)) form the Glutamine amidotransferase type-1 domain. 53–55 (GPG) is an L-glutamine binding site. The active-site Nucleophile; for GATase activity is the C80. L-glutamine contacts are provided by residues Q84 and 145–146 (SL). Catalysis depends on for GATase activity residues H185 and E187.

As to quaternary structure, heterotetramer consisting of two non-identical subunits: a beta subunit (TrpG) and a large alpha subunit (TrpE).

The catalysed reaction is chorismate + L-glutamine = anthranilate + pyruvate + L-glutamate + H(+). It functions in the pathway amino-acid biosynthesis; L-tryptophan biosynthesis; L-tryptophan from chorismate: step 1/5. Part of a heterotetrameric complex that catalyzes the two-step biosynthesis of anthranilate, an intermediate in the biosynthesis of L-tryptophan. In the first step, the glutamine-binding beta subunit (TrpG) of anthranilate synthase (AS) provides the glutamine amidotransferase activity which generates ammonia as a substrate that, along with chorismate, is used in the second step, catalyzed by the large alpha subunit of AS (TrpE) to produce anthranilate. In the absence of TrpG, TrpE can synthesize anthranilate directly from chorismate and high concentrations of ammonia. This Corynebacterium glutamicum (strain ATCC 13032 / DSM 20300 / JCM 1318 / BCRC 11384 / CCUG 27702 / LMG 3730 / NBRC 12168 / NCIMB 10025 / NRRL B-2784 / 534) protein is Anthranilate synthase component 2 (trpG).